We begin with the raw amino-acid sequence, 335 residues long: Ketol-acid reductoisomerase (NADP(+)) 2 (335 aa).

One can recognise a KARI N-terminal Rossmann domain in the interval 1-180 (MKTYYEQDAN…GCTRAGVIET (180 aa)). NADP(+) contacts are provided by residues 24 to 27 (YGSQ), Arg-47, Ser-51, and 81 to 84 (DEQQ). Residue His-106 is part of the active site. Position 132 (Gly-132) interacts with NADP(+). Residues 181-326 (TFQEETETDL…EELREMMSWI (146 aa)) form the KARI C-terminal knotted domain. Residues Asp-189, Glu-193, Glu-225, and Glu-229 each contribute to the Mg(2+) site. Ser-250 provides a ligand contact to substrate.

The protein belongs to the ketol-acid reductoisomerase family. Mg(2+) is required as a cofactor.

It catalyses the reaction (2R)-2,3-dihydroxy-3-methylbutanoate + NADP(+) = (2S)-2-acetolactate + NADPH + H(+). The catalysed reaction is (2R,3R)-2,3-dihydroxy-3-methylpentanoate + NADP(+) = (S)-2-ethyl-2-hydroxy-3-oxobutanoate + NADPH + H(+). The protein operates within amino-acid biosynthesis; L-isoleucine biosynthesis; L-isoleucine from 2-oxobutanoate: step 2/4. It functions in the pathway amino-acid biosynthesis; L-valine biosynthesis; L-valine from pyruvate: step 2/4. Its function is as follows. Involved in the biosynthesis of branched-chain amino acids (BCAA). Catalyzes an alkyl-migration followed by a ketol-acid reduction of (S)-2-acetolactate (S2AL) to yield (R)-2,3-dihydroxy-isovalerate. In the isomerase reaction, S2AL is rearranged via a Mg-dependent methyl migration to produce 3-hydroxy-3-methyl-2-ketobutyrate (HMKB). In the reductase reaction, this 2-ketoacid undergoes a metal-dependent reduction by NADPH to yield (R)-2,3-dihydroxy-isovalerate. This Bacillus thuringiensis subsp. konkukian (strain 97-27) protein is Ketol-acid reductoisomerase (NADP(+)) 2.